The sequence spans 2774 residues: Microtubule-associated protein 1A (2774 aa).

Ser114, Ser117, Ser118, Ser121, and Ser155 each carry phosphoserine. Tyr177 carries the phosphotyrosine modification. Residues 310-329 (PSKIKHRADSKESLKAAPKT) are disordered. Ser319 and Ser322 each carry phosphoserine. Copy 1 of the repeat occupies 336 to 338 (KRE). Positions 336-541 (KREEVLEEGA…TQDFEELKRE (206 aa)) are 11 X 3 AA repeats of K-K-[DE]. The segment covering 342–390 (EEGAKEARSELAKELAKTEKKAKEPSEKPPEKPSKSERVRGESSEALKA) has biased composition (basic and acidic residues). 9 disordered regions span residues 342–718 (EEGA…SFLS), 737–808 (TIPG…TELT), 845–939 (EDQS…VGKE), 957–1078 (FGAP…QTGC), 1093–1344 (ETGE…ILPE), 1357–1646 (QKDG…SPEQ), 1693–1725 (ESTF…KDFQ), 1739–1843 (LAES…VPFS), and 1861–2644 (AELE…LVNG). Ser384 is modified (phosphoserine). Residues 391 to 406 (EKRRLIKDKAGKKHLK) show a composition bias toward basic residues. Basic and acidic residues-rich tracts occupy residues 407-464 (EKIS…KPDL) and 484-500 (VKVD…ELSS). 9 consecutive repeat copies span residues 415–417 (KKD), 420–422 (KKE), 424–426 (KKE), 427–429 (RKE), 431–433 (KKE), 436–438 (RKE), 440–442 (KKD), 444–446 (KKD), and 449–451 (RKD). Thr504 is modified (phosphothreonine). Positions 506 to 516 (PAQKGAAPPAA) are enriched in low complexity. Phosphoserine occurs at positions 526 and 527. Composition is skewed to basic and acidic residues over residues 536–554 (EELK…DTGL) and 584–595 (EGEHVEREKEVV). The stretch at 539-541 (KRE) is repeat 11. Phosphoserine occurs at positions 604 and 611. Composition is skewed to basic and acidic residues over residues 614–631 (EVEK…REAE) and 638–675 (AARE…ETKA). Ser643 carries the post-translational modification Phosphoserine. Thr663 is subject to Phosphothreonine. A phosphoserine mark is found at Ser666, Ser677, Ser690, and Ser785. Polar residues-rich tracts occupy residues 845–858 (EDQS…PQTE) and 869–881 (TVTS…TEAT). 4 positions are modified to phosphoserine: Ser872, Ser875, Ser876, and Ser889. Thr892 is subject to Phosphothreonine. Phosphoserine occurs at positions 894, 898, 907, 980, 990, 998, 1007, 1013, 1022, 1029, 1037, 1061, 1132, 1134, 1148, 1160, 1178, 1188, 1191, 1197, 1206, and 1209. The segment covering 1008 to 1028 (PVEDKSEPRDFQEDSWGETKH) has biased composition (basic and acidic residues). The span at 1142 to 1157 (SVLSVVSPDTTKQEAT) shows a compositional bias: polar residues. A compositionally biased stretch (polar residues) spans 1180–1190 (EDTQSLSFSEE). Over residues 1198–1212 (LDISSKQLSPESLGT) the composition is skewed to polar residues. Positions 1220 to 1236 (LGKEERGPVMKAEDDSC) are enriched in basic and acidic residues. Phosphoserine is present on residues Ser1252, Ser1280, Ser1301, Ser1304, and Ser1307. Residues 1293-1308 (TSDSSLTKSPESLSSP) are compositionally biased toward low complexity. Basic and acidic residues-rich tracts occupy residues 1317–1336 (WEGK…ETRQ), 1357–1409 (QKDG…EDQG), 1416–1428 (AEKD…RDTD), 1436–1479 (EPRD…EHSI), and 1487–1574 (RAPD…KADS). Residues Ser1504, Ser1568, Ser1574, and Ser1594 each carry the phosphoserine modification. Over residues 1599 to 1613 (SKAREQEKKYWKEQD) the composition is skewed to basic and acidic residues. Phosphoserine is present on residues Ser1622, Ser1643, Ser1715, Ser1742, Ser1757, Ser1763, and Ser1767. The span at 1707–1718 (TPLQHTPRSPWT) shows a compositional bias: polar residues. Thr1772 is modified (phosphothreonine). Phosphoserine occurs at positions 1778 and 1784. Residues 1789 to 1803 (TESTAPMRNEPTTPS) show a composition bias toward polar residues. Pro residues predominate over residues 1818 to 1839 (LPPAPLSPAPAPPTPAPEPHTP). A compositionally biased stretch (basic and acidic residues) spans 1873–1885 (KDYRKAEGEREGE). Ser1897 is modified (phosphoserine). Over residues 1908–1930 (ATRDTEQTEPEQREPTPYPDERS) the composition is skewed to basic and acidic residues. Phosphothreonine is present on Thr1923. A compositionally biased stretch (polar residues) spans 1984–1997 (SSPASPQNLQSDTP). Ser1988 bears the Phosphoserine mark. Positions 2008-2034 (AVPPRQEPDPGPNVEPSITPPAVPPRA) are enriched in pro residues. Residue Thr2026 is modified to Phosphothreonine. A phosphoserine mark is found at Ser2043 and Ser2077. The segment covering 2055–2092 (PDRRTPSPKETGRGHWDDGTNDSDLEKGAREQPEKETR) has biased composition (basic and acidic residues). The segment covering 2115–2125 (SSLSSDSHLGS) has biased composition (low complexity). Over residues 2144 to 2153 (PAPPQLPSPA) the composition is skewed to pro residues. Ser2204, Ser2221, Ser2225, Ser2228, Ser2229, and Ser2260 each carry phosphoserine. A compositionally biased stretch (polar residues) spans 2226 to 2237 (EGSSSEATTPVI). Residues 2271-2287 (DLTPLSPAPSASLDLAP) are compositionally biased toward low complexity. Pro residues predominate over residues 2288-2298 (APAPAPAPAPG). A compositionally biased stretch (low complexity) spans 2299–2309 (LPGDLGDGTLP). Positions 2352-2364 (AEKEEAEAPHAWE) are enriched in basic and acidic residues. A Phosphoserine modification is found at Ser2424. Residues 2477–2489 (SASDSGSSQSDSD) are compositionally biased toward low complexity. Over residues 2534 to 2550 (DPPPTPLPDPRPSPPRP) the composition is skewed to pro residues. Over residues 2565 to 2575 (GRVERLREKGR) the composition is skewed to basic and acidic residues. Over residues 2613 to 2623 (RTVPRPRSTPS) the composition is skewed to low complexity. Phosphoserine occurs at positions 2620 and 2635.

Belongs to the MAP1 family. As to quaternary structure, 3 different light chains, LC1 (a cleavage product of MAP1B), LC2 (a cleavage product of MAP1A) and LC3 (produced by one of the MAP1LC3 genes), can associate with the MAP1A or MAP1B heavy chains. Interacts with guanylate kinase-like domain of DLG1, DLG2 and DLG4. Binds to CSNK1D. Interacts with TIAM2. Interacts with ELAVL4. Phosphorylated by CSNK1D. Post-translationally, LC2 is generated from MAP1A by proteolytic processing. It is free to associate with both MAP1A and MAP1B. Brain, heart and muscle.

The protein resides in the cytoplasm. The protein localises to the cytoskeleton. Its function is as follows. Structural protein involved in the filamentous cross-bridging between microtubules and other skeletal elements. This is Microtubule-associated protein 1A (Map1a) from Rattus norvegicus (Rat).